Consider the following 428-residue polypeptide: MKIYKLQTPVNAILENIAADKSISHRFAIFSLLTQEENKAQNYLLAQDTLNTLEIIKNLGAKIEQKDSCVKIIPPKEILSPNCILDCGNSGTAMRLMIGFLAGISGFFVLSGDKYLNNRPMRRISKPLTQIGARIYGRNEANLAPLCIEGQKLKAFNFKSEISSAQVKTAMILSAFRADNVCTFSEISLSRNHSENMLKAMKAPIRVSNDDLSLEINPLKKPLKAQNIIIPNDPSSAFYFVLAAIILPKSQIILKNILLNPTRIEAYKILQKMGAKLEMTITQNDFETIGEIRVESSKLNGIEVKDNIAWLIDEAPALAIAFALAKGKSSLINAKELRVKESDRIAVMVENLKLCGVEARELDDGFEIEGGCELKSSKIKSYGDHRIAMSFAILGLLCGIEIDDSDCIKTSFPNFIEILSNLGARIDY.

The 3-phosphoshikimate site is built by Lys21, Ser22, and Arg26. Lys21 contacts phosphoenolpyruvate. Positions 91 and 119 each coordinate phosphoenolpyruvate. Positions 164, 166, 313, and 340 each coordinate 3-phosphoshikimate. Gln166 lines the phosphoenolpyruvate pocket. The Proton acceptor role is filled by Asp313. Residues Arg344 and Arg386 each coordinate phosphoenolpyruvate.

Belongs to the EPSP synthase family. Monomer.

The protein resides in the cytoplasm. It carries out the reaction 3-phosphoshikimate + phosphoenolpyruvate = 5-O-(1-carboxyvinyl)-3-phosphoshikimate + phosphate. It functions in the pathway metabolic intermediate biosynthesis; chorismate biosynthesis; chorismate from D-erythrose 4-phosphate and phosphoenolpyruvate: step 6/7. In terms of biological role, catalyzes the transfer of the enolpyruvyl moiety of phosphoenolpyruvate (PEP) to the 5-hydroxyl of shikimate-3-phosphate (S3P) to produce enolpyruvyl shikimate-3-phosphate and inorganic phosphate. The chain is 3-phosphoshikimate 1-carboxyvinyltransferase from Campylobacter jejuni subsp. jejuni serotype O:23/36 (strain 81-176).